An 889-amino-acid polypeptide reads, in one-letter code: Alanine--tRNA ligase (889 aa).

4 residues coordinate Zn(2+): His-564, His-568, Cys-677, and His-681.

It belongs to the class-II aminoacyl-tRNA synthetase family. Zn(2+) is required as a cofactor.

It localises to the cytoplasm. It carries out the reaction tRNA(Ala) + L-alanine + ATP = L-alanyl-tRNA(Ala) + AMP + diphosphate. Its function is as follows. Catalyzes the attachment of alanine to tRNA(Ala) in a two-step reaction: alanine is first activated by ATP to form Ala-AMP and then transferred to the acceptor end of tRNA(Ala). Also edits incorrectly charged Ser-tRNA(Ala) and Gly-tRNA(Ala) via its editing domain. This is Alanine--tRNA ligase from Rhodopseudomonas palustris (strain ATCC BAA-98 / CGA009).